Consider the following 184-residue polypeptide: ADP-ribosylation factor-like protein 3 (184 aa).

Gly-2 carries N-myristoyl glycine lipidation. GTP is bound by residues Gly-24–Thr-31, Asp-68–Gln-72, and Asn-127–Asp-130.

This sequence belongs to the small GTPase superfamily. Arf family.

The protein localises to the golgi apparatus. Its function is as follows. GTP-binding protein that may be involved in protein trafficking; may modulate vesicle budding and uncoating within the Golgi apparatus. In Caenorhabditis elegans, this protein is ADP-ribosylation factor-like protein 3 (arl-3).